Consider the following 225-residue polypeptide: MEHSRIKKRNVALIEKCVMSSIGIESLFRKFAGNPYKLHTYTSQESFQDAMSRISFAAVIFSFSAMRSERREGLSCLTELAIKFPRTRRLVIADDDIEARLIGSLSPSPLDGVLSKASTLEIFHQELFLSLNGVRQATDRLNNQWYINQSRTLSPTEREILRFMSRGYSMTQIAEQLKRNIKTIRAHKFNVMSKLGVSSDAGLLEAADILLCMRHCETSNVLHPY.

Positions Y146–L211 constitute an HTH luxR-type domain. The segment at residues M170 to F189 is a DNA-binding region (H-T-H motif).

As to quaternary structure, forms a complex with RcsB; genetically both BglJ and RcsB are required to relieve bgl operon repression by H-NS and by StpA.

Functionally, a crytic transcriptional activator. When its expression is induced it relieves H-NS repression of the bgl operon. Acts independently of transcription factor LeuO. This Escherichia coli (strain K12) protein is Transcriptional activator protein BglJ (bglJ).